The chain runs to 497 residues: Probable malate:quinone oxidoreductase (497 aa).

It belongs to the MQO family. Requires FAD as cofactor.

The catalysed reaction is (S)-malate + a quinone = a quinol + oxaloacetate. The protein operates within carbohydrate metabolism; tricarboxylic acid cycle; oxaloacetate from (S)-malate (quinone route): step 1/1. This chain is Probable malate:quinone oxidoreductase, found in Prochlorococcus marinus (strain MIT 9515).